Consider the following 905-residue polypeptide: Coatomer subunit beta' (905 aa).

WD repeat units follow at residues Ala-13 to Thr-52, Val-55 to Met-94, Ala-97 to Gln-136, Gly-140 to Thr-180, Gly-183 to Thr-224, Gly-227 to Thr-266, Ser-350 to Phe-388, and Ser-390 to Lys-425. Lys-627 carries the post-translational modification N6-acetyllysine. The WD 9 repeat unit spans residues Ile-746–Lys-783. The tract at residues Glu-837–Glu-873 is disordered. Ser-859 is subject to Phosphoserine. Residues Gln-867–Ile-891 are a coiled coil.

Belongs to the WD repeat COPB2 family. Oligomeric complex that consists of at least the alpha, beta, beta', gamma, delta, epsilon and zeta subunits. Probably interacts with PEX11A. Interacts with SCYL1. Interacts with JAGN1.

The protein resides in the cytoplasm. The protein localises to the cytosol. It localises to the golgi apparatus membrane. It is found in the cytoplasmic vesicle. Its subcellular location is the COPI-coated vesicle membrane. In terms of biological role, the coatomer is a cytosolic protein complex that binds to dilysine motifs and reversibly associates with Golgi non-clathrin-coated vesicles, which further mediate biosynthetic protein transport from the ER, via the Golgi up to the trans Golgi network. Coatomer complex is required for budding from Golgi membranes, and is essential for the retrograde Golgi-to-ER transport of dilysine-tagged proteins. In mammals, the coatomer can only be recruited by membranes associated to ADP-ribosylation factors (ARFs), which are small GTP-binding proteins; the complex also influences the Golgi structural integrity, as well as the processing, activity, and endocytic recycling of LDL receptors. Functionally, this coatomer complex protein, essential for Golgi budding and vesicular trafficking, is a selective binding protein (RACK) for protein kinase C, epsilon type. It binds to Golgi membranes in a GTP-dependent manner. The protein is Coatomer subunit beta' (Copb2) of Mus musculus (Mouse).